The sequence spans 267 residues: MKKATTILDIQKMKAEGEKISMLTCYDYPTARIMDDCGIDMILIGDSVGVVYAGYDNTLPVTMEDMIYHTRAVVRAQPKALVVADMPFLSYQTDMVSARLNAGRLIKEGGAAAVKIEGGVNVAPVIEAITSMDIPVVAHIGLTPQSLHRMGGYRVQGRNNEQAEKLLADARAVESAGAFAVVLEGIPAALAARITSESGIPTIGIGAGPSCDGQVLVIHDILGLCEKYAPKFVKRYADLKPVIAQAISSYIQEVKEGAFPTEGNSFN.

The Mg(2+) site is built by aspartate 46 and aspartate 85. 3-methyl-2-oxobutanoate contacts are provided by residues aspartate 46–serine 47, aspartate 85, and lysine 115. Glutamate 117 is a Mg(2+) binding site. Glutamate 184 functions as the Proton acceptor in the catalytic mechanism.

Belongs to the PanB family. Homodecamer; pentamer of dimers. Requires Mg(2+) as cofactor.

The protein resides in the cytoplasm. It carries out the reaction 3-methyl-2-oxobutanoate + (6R)-5,10-methylene-5,6,7,8-tetrahydrofolate + H2O = 2-dehydropantoate + (6S)-5,6,7,8-tetrahydrofolate. Its pathway is cofactor biosynthesis; (R)-pantothenate biosynthesis; (R)-pantoate from 3-methyl-2-oxobutanoate: step 1/2. Functionally, catalyzes the reversible reaction in which hydroxymethyl group from 5,10-methylenetetrahydrofolate is transferred onto alpha-ketoisovalerate to form ketopantoate. The chain is 3-methyl-2-oxobutanoate hydroxymethyltransferase from Geotalea daltonii (strain DSM 22248 / JCM 15807 / FRC-32) (Geobacter daltonii).